A 955-amino-acid chain; its full sequence is RNA polymerase-associated protein RapA (955 aa).

Residues 163-333 (EVGHRYAPRV…FARLRLLDPE (171 aa)) form the Helicase ATP-binding domain. An ATP-binding site is contributed by 176–183 (DEVGLGKT). The short motif at 279 to 282 (DEAH) is the DEAH box element. The region spanning 478–642 (RVDWLLELLL…AVRDELFELL (165 aa)) is the Helicase C-terminal domain.

Belongs to the SNF2/RAD54 helicase family. RapA subfamily. Interacts with the RNAP. Has a higher affinity for the core RNAP than for the holoenzyme. Its ATPase activity is stimulated by binding to RNAP.

Functionally, transcription regulator that activates transcription by stimulating RNA polymerase (RNAP) recycling in case of stress conditions such as supercoiled DNA or high salt concentrations. Probably acts by releasing the RNAP, when it is trapped or immobilized on tightly supercoiled DNA. Does not activate transcription on linear DNA. Probably not involved in DNA repair. This chain is RNA polymerase-associated protein RapA, found in Aeromonas salmonicida (strain A449).